The chain runs to 92 residues: Small ribosomal subunit protein uS19 (92 aa).

The protein belongs to the universal ribosomal protein uS19 family.

Protein S19 forms a complex with S13 that binds strongly to the 16S ribosomal RNA. This chain is Small ribosomal subunit protein uS19, found in Mesorhizobium japonicum (strain LMG 29417 / CECT 9101 / MAFF 303099) (Mesorhizobium loti (strain MAFF 303099)).